The following is a 511-amino-acid chain: 2,3-bisphosphoglycerate-independent phosphoglycerate mutase (511 aa).

Mn(2+) is bound by residues aspartate 12 and serine 62. The active-site Phosphoserine intermediate is the serine 62. Residues histidine 123, 153–154 (RD), arginine 185, arginine 191, 260–263 (RPDR), and lysine 335 contribute to the substrate site. Residues aspartate 402, histidine 406, aspartate 443, histidine 444, and histidine 462 each contribute to the Mn(2+) site.

Belongs to the BPG-independent phosphoglycerate mutase family. Monomer. The cofactor is Mn(2+).

It catalyses the reaction (2R)-2-phosphoglycerate = (2R)-3-phosphoglycerate. Its pathway is carbohydrate degradation; glycolysis; pyruvate from D-glyceraldehyde 3-phosphate: step 3/5. Its function is as follows. Catalyzes the interconversion of 2-phosphoglycerate and 3-phosphoglycerate. This Acetivibrio thermocellus (strain ATCC 27405 / DSM 1237 / JCM 9322 / NBRC 103400 / NCIMB 10682 / NRRL B-4536 / VPI 7372) (Clostridium thermocellum) protein is 2,3-bisphosphoglycerate-independent phosphoglycerate mutase.